Reading from the N-terminus, the 927-residue chain is Protein translocase subunit SecA (927 aa).

Residues glutamine 86, 104 to 108 (GEGKT), and aspartate 494 each bind ATP. The tract at residues 853 to 927 (YTAPDEDGTP…GSKAKRGKRR (75 aa)) is disordered. The segment covering 860 to 879 (GTPHAEVEAVDPGARERTSE) has biased composition (basic and acidic residues). Basic residues predominate over residues 907–927 (RAKRRGASARSGSKAKRGKRR).

Belongs to the SecA family. In terms of assembly, monomer and homodimer. Part of the essential Sec protein translocation apparatus which comprises SecA, SecYEG and auxiliary proteins SecDF. Other proteins may also be involved.

Its subcellular location is the cell membrane. The protein resides in the cytoplasm. The catalysed reaction is ATP + H2O + cellular proteinSide 1 = ADP + phosphate + cellular proteinSide 2.. Functionally, part of the Sec protein translocase complex. Interacts with the SecYEG preprotein conducting channel. Has a central role in coupling the hydrolysis of ATP to the transfer of proteins into and across the cell membrane, serving as an ATP-driven molecular motor driving the stepwise translocation of polypeptide chains across the membrane. This chain is Protein translocase subunit SecA, found in Kocuria rhizophila (strain ATCC 9341 / DSM 348 / NBRC 103217 / DC2201).